Reading from the N-terminus, the 500-residue chain is L-arabinose isomerase (500 aa).

Residues Glu-306, Glu-333, His-350, and His-450 each coordinate Mn(2+).

This sequence belongs to the arabinose isomerase family. Homohexamer. Requires Mn(2+) as cofactor.

The enzyme catalyses beta-L-arabinopyranose = L-ribulose. Its pathway is carbohydrate degradation; L-arabinose degradation via L-ribulose; D-xylulose 5-phosphate from L-arabinose (bacterial route): step 1/3. Its function is as follows. Catalyzes the conversion of L-arabinose to L-ribulose. The chain is L-arabinose isomerase from Escherichia coli O17:K52:H18 (strain UMN026 / ExPEC).